Here is a 311-residue protein sequence, read N- to C-terminus: Aspartate carbamoyltransferase catalytic subunit (311 aa).

Carbamoyl phosphate is bound by residues arginine 55 and threonine 56. Lysine 85 contributes to the L-aspartate binding site. Carbamoyl phosphate contacts are provided by arginine 106, histidine 135, and glutamine 138. Residues arginine 168 and arginine 230 each coordinate L-aspartate. Leucine 268 and proline 269 together coordinate carbamoyl phosphate.

The protein belongs to the aspartate/ornithine carbamoyltransferase superfamily. ATCase family. In terms of assembly, heterododecamer (2C3:3R2) of six catalytic PyrB chains organized as two trimers (C3), and six regulatory PyrI chains organized as three dimers (R2).

The enzyme catalyses carbamoyl phosphate + L-aspartate = N-carbamoyl-L-aspartate + phosphate + H(+). Its pathway is pyrimidine metabolism; UMP biosynthesis via de novo pathway; (S)-dihydroorotate from bicarbonate: step 2/3. Its function is as follows. Catalyzes the condensation of carbamoyl phosphate and aspartate to form carbamoyl aspartate and inorganic phosphate, the committed step in the de novo pyrimidine nucleotide biosynthesis pathway. This is Aspartate carbamoyltransferase catalytic subunit from Escherichia coli O139:H28 (strain E24377A / ETEC).